A 274-amino-acid chain; its full sequence is GATA transcription factor 1 (274 aa).

2 disordered regions span residues 1-39 (MEME…KTGL) and 102-132 (SPVS…TAVA). The Nuclear localization signal motif lies at 152-159 (KARSKRRR). A GATA-type zinc finger spans residues 190–244 (LIMGRKCQHCGAEKTPQWRAGPAGPKTLCNACGVRYKSGRLVPEYRPANSPTFTA).

The protein belongs to the type IV zinc-finger family. Class A subfamily. In terms of tissue distribution, mostly expressed in roots. Also expressed in stems, flowers and leaves.

It is found in the nucleus. Functionally, transcriptional activator that specifically binds 5'-GATA-3' or 5'-GAT-3' motifs within gene promoters. May be involved in the regulation of some light-responsive genes. The protein is GATA transcription factor 1 (GATA1) of Arabidopsis thaliana (Mouse-ear cress).